Consider the following 225-residue polypeptide: Membrin-11 (225 aa).

The residue at position 2 (A2) is an N-acetylalanine. The Cytoplasmic portion of the chain corresponds to 2-200 (ASGIVEGGGS…VLRLIERRNR (199 aa)). The chain crosses the membrane as a helical; Anchor for type IV membrane protein span at residues 201–221 (VDTWIKYAGMIATLVILYLFI). Residues 222–225 (RWTR) lie on the Vesicular side of the membrane.

This sequence belongs to the GOSR2 family.

It is found in the golgi apparatus membrane. In terms of biological role, involved in transport of proteins from the cis/medial-Golgi to the trans-Golgi network. The protein is Membrin-11 (MEMB11) of Arabidopsis thaliana (Mouse-ear cress).